The following is a 917-amino-acid chain: Protein translocase subunit SecA (917 aa).

ATP is bound by residues Q87, 105–109 (GEGKT), and D501. C901, C903, C912, and H913 together coordinate Zn(2+).

Belongs to the SecA family. As to quaternary structure, monomer and homodimer. Part of the essential Sec protein translocation apparatus which comprises SecA, SecYEG and auxiliary proteins SecDF-YajC and YidC. Zn(2+) serves as cofactor.

The protein localises to the cell inner membrane. The protein resides in the cytoplasm. The catalysed reaction is ATP + H2O + cellular proteinSide 1 = ADP + phosphate + cellular proteinSide 2.. Functionally, part of the Sec protein translocase complex. Interacts with the SecYEG preprotein conducting channel. Has a central role in coupling the hydrolysis of ATP to the transfer of proteins into and across the cell membrane, serving both as a receptor for the preprotein-SecB complex and as an ATP-driven molecular motor driving the stepwise translocation of polypeptide chains across the membrane. This chain is Protein translocase subunit SecA, found in Granulibacter bethesdensis (strain ATCC BAA-1260 / CGDNIH1).